We begin with the raw amino-acid sequence, 846 residues long: Structure-specific endonuclease subunit SLX4 (846 aa).

Disordered stretches follow at residues 1 to 20 (MTDH…VGSA), 84 to 111 (KAGA…AESM), 123 to 164 (QPAE…VKKA), 283 to 322 (RTSK…SKIT), 480 to 513 (DPTP…SSLL), 624 to 690 (PPNA…MGSQ), and 723 to 751 (TLAS…QTRA). The segment covering 141 to 153 (KPSEKGQKSEKTA) has biased composition (basic and acidic residues). Over residues 293–303 (LDTGTSSTSEG) the composition is skewed to polar residues. The segment covering 306 to 318 (KRKQTKKAKRSAK) has biased composition (basic residues). Composition is skewed to polar residues over residues 657–680 (KEIT…SKPT) and 725–751 (ASRS…QTRA).

Belongs to the SLX4 family. Forms a heterodimer with SLX1. Phosphorylated in response to DNA damage.

Its subcellular location is the nucleus. Regulatory subunit of the SLX1-SLX4 structure-specific endonuclease that resolves DNA secondary structures generated during DNA repair and recombination. Has endonuclease activity towards branched DNA substrates, introducing single-strand cuts in duplex DNA close to junctions with ss-DNA. The polypeptide is Structure-specific endonuclease subunit SLX4 (Arthroderma otae (strain ATCC MYA-4605 / CBS 113480) (Microsporum canis)).